A 214-amino-acid polypeptide reads, in one-letter code: Pyridoxine/pyridoxamine 5'-phosphate oxidase (214 aa).

Residues 8 to 11 and Lys-66 contribute to the substrate site; that span reads RTNY. Residues 61–66, 76–77, Arg-82, Lys-83, and Gln-105 each bind FMN; these read RIVLIK and FT. The substrate site is built by Tyr-123, Arg-127, and Ser-131. FMN contacts are provided by residues 140–141 and Trp-184; that span reads QS. 190-192 provides a ligand contact to substrate; the sequence is RLH. Arg-194 is an FMN binding site.

Belongs to the pyridoxamine 5'-phosphate oxidase family. Homodimer. Requires FMN as cofactor.

It carries out the reaction pyridoxamine 5'-phosphate + O2 + H2O = pyridoxal 5'-phosphate + H2O2 + NH4(+). The catalysed reaction is pyridoxine 5'-phosphate + O2 = pyridoxal 5'-phosphate + H2O2. Its pathway is cofactor metabolism; pyridoxal 5'-phosphate salvage; pyridoxal 5'-phosphate from pyridoxamine 5'-phosphate: step 1/1. It functions in the pathway cofactor metabolism; pyridoxal 5'-phosphate salvage; pyridoxal 5'-phosphate from pyridoxine 5'-phosphate: step 1/1. Functionally, catalyzes the oxidation of either pyridoxine 5'-phosphate (PNP) or pyridoxamine 5'-phosphate (PMP) into pyridoxal 5'-phosphate (PLP). The chain is Pyridoxine/pyridoxamine 5'-phosphate oxidase from Burkholderia pseudomallei (strain 1106a).